The primary structure comprises 533 residues: NADH-quinone oxidoreductase subunit N (533 aa).

The next 14 helical transmembrane spans lie at 13–33, 40–60, 87–107, 141–161, 164–184, 200–220, 243–263, 275–295, 310–330, 337–357, 373–393, 417–437, 451–471, and 502–522; these read VWPLLVVFGVAAVGVLVEGFV, LVQAALAIAGVVVALVGTILV, PALFIWGMLLVFALGGALLFA, HTEVYPLMMFALGGMMLFAAA, LLTLFVALEVLSLPLYLLSGL, FMLGAFSSGFFLYGAALVYGF, LLIGIGMLSVGLLFKVGAVPF, PTAVTAFMAAGTKIAAFGAML, QPMLWIIAILTMLVGALIAIV, MLAYSSVAHTGFLLTGVLGVQ, VLFYLVTYGFAVVGAFAVVTL, VAGVFAFFLLSMAGIPLTAGF, GAWPVVIAAVLCSIIAVFFYV, and ATIFVGVAATLVLGVVPGPVL.

The protein belongs to the complex I subunit 2 family. NDH-1 is composed of 14 different subunits. Subunits NuoA, H, J, K, L, M, N constitute the membrane sector of the complex.

It localises to the cell membrane. It carries out the reaction a quinone + NADH + 5 H(+)(in) = a quinol + NAD(+) + 4 H(+)(out). Functionally, NDH-1 shuttles electrons from NADH, via FMN and iron-sulfur (Fe-S) centers, to quinones in the respiratory chain. The immediate electron acceptor for the enzyme in this species is believed to be a menaquinone. Couples the redox reaction to proton translocation (for every two electrons transferred, four hydrogen ions are translocated across the cytoplasmic membrane), and thus conserves the redox energy in a proton gradient. This chain is NADH-quinone oxidoreductase subunit N, found in Nocardioides sp. (strain ATCC BAA-499 / JS614).